The following is a 318-amino-acid chain: Methionyl-tRNA formyltransferase (318 aa).

111–114 (SLLP) provides a ligand contact to (6S)-5,6,7,8-tetrahydrofolate.

Belongs to the Fmt family.

It carries out the reaction L-methionyl-tRNA(fMet) + (6R)-10-formyltetrahydrofolate = N-formyl-L-methionyl-tRNA(fMet) + (6S)-5,6,7,8-tetrahydrofolate + H(+). Its function is as follows. Attaches a formyl group to the free amino group of methionyl-tRNA(fMet). The formyl group appears to play a dual role in the initiator identity of N-formylmethionyl-tRNA by promoting its recognition by IF2 and preventing the misappropriation of this tRNA by the elongation apparatus. In Chlorobium limicola (strain DSM 245 / NBRC 103803 / 6330), this protein is Methionyl-tRNA formyltransferase.